The sequence spans 314 residues: Probable cell division protein WhiA (314 aa).

A DNA-binding region (H-T-H motif) is located at residues 274 to 308 (SLKELGEMMSTGKISKSGVNHRLRKLNEMADKLRS).

It belongs to the WhiA family.

Involved in cell division and chromosome segregation. In Staphylococcus saprophyticus subsp. saprophyticus (strain ATCC 15305 / DSM 20229 / NCIMB 8711 / NCTC 7292 / S-41), this protein is Probable cell division protein WhiA.